Reading from the N-terminus, the 155-residue chain is MYTITKGPSKLVAQRRTGPTQQQVESRLGELLKCRHSAPTPQHPRAQPPGPWPLSSPGPRLVFNRVNGRRPPATSPSLEGTQEPYTLAHEENVRFVSEAWQQVEQQLGGGPAGESGPRPVQYVERTPNPRLQNFVPIDLDEWWAQQFLARITSCS.

The residue at position 1 (M1) is an N-acetylmethionine. The tract at residues 1–59 (MYTITKGPSKLVAQRRTGPTQQQVESRLGELLKCRHSAPTPQHPRAQPPGPWPLSSPGP) is disordered. R35 is subject to Omega-N-methylarginine. Residues 46-56 (AQPPGPWPLSS) are compositionally biased toward pro residues. A Phosphoserine modification is found at S56. An Omega-N-methylarginine modification is found at R60. Phosphoserine is present on S77.

Belongs to the MCRIP family. As to quaternary structure, interacts with DDX6. Interacts with MCRIP1.

The protein localises to the cytoplasm. It is found in the stress granule. Its subcellular location is the nucleus. This Bos taurus (Bovine) protein is MAPK regulated corepressor interacting protein 2 (MCRIP2).